Reading from the N-terminus, the 137-residue chain is Interferon-induced transmembrane protein 3 (137 aa).

Topologically, residues 1 to 57 (MNHTSQAFVNAATGGQPPNYERIKEEYEVSELGAPHGSASVRTTVINMPREVSVPDH) are cytoplasmic. Position 20 is a phosphotyrosine (tyrosine 20). A Glycyl lysine isopeptide (Lys-Gly) (interchain with G-Cter in ubiquitin) cross-link involves residue lysine 24. Tyrosine 27 is subject to Phosphotyrosine. Positions 58–78 (VVWSLFNTLFMNFCCLGFIAY) form an intramembrane region, helical. Positions 60–93 (WSLFNTLFMNFCCLGFIAYAYSVKSRDRKMVGDM) are interaction with SPP1. 2 S-palmitoyl cysteine lipidation sites follow: cysteine 71 and cysteine 72. The Cytoplasmic segment spans residues 79-109 (AYSVKSRDRKMVGDMTGAQAYASTAKCLNIS). Glycyl lysine isopeptide (Lys-Gly) (interchain with G-Cter in ubiquitin) cross-links involve residues lysine 83, lysine 88, and lysine 104. Cysteine 105 is lipidated: S-palmitoyl cysteine. The segment at 108 to 133 (ISSLVLSILMVIITIVTVVIIALNAP) is interaction with VAPA. Residues 110-130 (SLVLSILMVIITIVTVVIIAL) traverse the membrane as a helical segment. Topologically, residues 131 to 137 (NAPRLQT) are extracellular.

The protein belongs to the CD225/Dispanin family. As to quaternary structure, interacts with ATP6V0B. Interacts with CD81. Interacts with SPP1; the interaction reduces OPN expression. Interacts with BRI3. Post-translationally, polyubiquitinated with both 'Lys-48' and 'Lys-63' linkages. Ubiquitination negatively regulates antiviral activity. Lys-24 is the most prevalent ubiquitination site. Phosphorylation at Tyr-20 is required for endosomal and lysosomal location.

The protein resides in the cell membrane. The protein localises to the late endosome membrane. It localises to the early endosome membrane. Its subcellular location is the lysosome membrane. It is found in the cytoplasm. The protein resides in the perinuclear region. Functionally, IFN-induced antiviral protein which disrupts intracellular cholesterol homeostasis. Inhibits the entry of viruses to the host cell cytoplasm by preventing viral fusion with cholesterol depleted endosomes. May inactivate new enveloped viruses which buds out of the infected cell, by letting them go out with a cholesterol depleted membrane. Active against multiple viruses. Plays a critical role in the structural stability and function of vacuolar ATPase (v-ATPase). Establishes physical contact with the v-ATPase of endosomes which is critical for proper clathrin localization and is also required for the function of the v-ATPase to lower the pH in phagocytic endosomes thus establishing an antiviral state. This is Interferon-induced transmembrane protein 3 from Rattus norvegicus (Rat).